Here is a 286-residue protein sequence, read N- to C-terminus: Probable ketoamine kinase EAE_16955 (286 aa).

92-94 (EYL) serves as a coordination point for ATP. Asp-194 acts as the Proton acceptor in catalysis.

It belongs to the fructosamine kinase family.

Its function is as follows. Ketoamine kinase that phosphorylates ketoamines on the third carbon of the sugar moiety to generate ketoamine 3-phosphate. The protein is Probable ketoamine kinase EAE_16955 of Klebsiella aerogenes (strain ATCC 13048 / DSM 30053 / CCUG 1429 / JCM 1235 / KCTC 2190 / NBRC 13534 / NCIMB 10102 / NCTC 10006 / CDC 819-56) (Enterobacter aerogenes).